The following is a 753-amino-acid chain: ATPase family gene 2 protein homolog B (753 aa).

M1 is modified (N-acetylmethionine). The tract at residues 1-189 is required for interaction with AFG2A and CINP; that stretch reads MAPDSDPFPE…PRTRVSLGGE (189 aa). The tract at residues 171 to 203 is disordered; sequence SPDPAGLVTPRTRVSLGGEPPSEAQPQPEVPLG. ATP is bound by residues 241–248 and 505–512; these read GPPGVGKT and GPPGCAKT.

This sequence belongs to the AAA ATPase family. AFG2 subfamily. As to quaternary structure, part of the 55LCC heterohexameric ATPase complex composed at least of AIRIM, AFG2A, AFG2B and CINP. Associates with pre-60S ribosomal particles. In terms of tissue distribution, expressed in both neurons and glia during embryonic and adult stages of brain development.

The protein localises to the cytoplasm. Its subcellular location is the cytoskeleton. The protein resides in the spindle. It is found in the nucleus. It catalyses the reaction ATP + H2O = ADP + phosphate + H(+). In the context of 55LCC heterohexameric ATPase complex, the ATPase activity is stimulated by DNA binding and inhibited in presence of RNA. In terms of biological role, ATP-dependent chaperone part of the 55LCC heterohexameric ATPase complex which is chromatin-associated and promotes replisome proteostasis to maintain replication fork progression and genome stability. Required for replication fork progression, sister chromatid cohesion, and chromosome stability. The ATPase activity is specifically enhanced by replication fork DNA and is coupled to cysteine protease-dependent cleavage of replisome substrates in response to replication fork damage. Uses ATPase activity to process replisome substrates in S-phase, facilitating their proteolytic turnover from chromatin to ensure DNA replication and mitotic fidelity. Plays an essential role in the cytoplasmic maturation steps of pre-60S ribosomal particles by promoting the release of shuttling protein RSL24D1/RLP24 from the pre-ribosomal particles. The protein is ATPase family gene 2 protein homolog B of Homo sapiens (Human).